The chain runs to 270 residues: Aliphatic sulfonates import ATP-binding protein SsuB 2 (270 aa).

In terms of domain architecture, ABC transporter spans 17 to 241; it reads LLDLRIARKL…PRDRRDPSLA (225 aa). ATP is bound at residue 50–57; that stretch reads GPSGCGKS.

Belongs to the ABC transporter superfamily. Aliphatic sulfonates importer (TC 3.A.1.17.2) family. As to quaternary structure, the complex is composed of two ATP-binding proteins (SsuB), two transmembrane proteins (SsuC) and a solute-binding protein (SsuA).

It localises to the cell inner membrane. The enzyme catalyses ATP + H2O + aliphatic sulfonate-[sulfonate-binding protein]Side 1 = ADP + phosphate + aliphatic sulfonateSide 2 + [sulfonate-binding protein]Side 1.. In terms of biological role, part of the ABC transporter complex SsuABC involved in aliphatic sulfonates import. Responsible for energy coupling to the transport system. The chain is Aliphatic sulfonates import ATP-binding protein SsuB 2 from Burkholderia cenocepacia (strain HI2424).